An 814-amino-acid polypeptide reads, in one-letter code: Glycogen phosphorylase (814 aa).

N6-(pyridoxal phosphate)lysine is present on Lys662.

The protein belongs to the glycogen phosphorylase family. It depends on pyridoxal 5'-phosphate as a cofactor.

The enzyme catalyses [(1-&gt;4)-alpha-D-glucosyl](n) + phosphate = [(1-&gt;4)-alpha-D-glucosyl](n-1) + alpha-D-glucose 1-phosphate. In terms of biological role, phosphorylase is an important allosteric enzyme in carbohydrate metabolism. Enzymes from different sources differ in their regulatory mechanisms and in their natural substrates. However, all known phosphorylases share catalytic and structural properties. The sequence is that of Glycogen phosphorylase (glgP) from Chlamydia trachomatis serovar D (strain ATCC VR-885 / DSM 19411 / UW-3/Cx).